A 358-amino-acid polypeptide reads, in one-letter code: Replication-associated protein (358 aa).

Residues 8–116 (RIQAKNIFLT…DGDTIEWGEF (109 aa)) enclose the CRESS-DNA virus Rep endonuclease domain. The short motif at 15 to 18 (FLTY) is the RCR-1 element. Positions 49, 57, and 59 each coordinate a divalent metal cation. Positions 57–59 (HLH) match the RCR-2 motif. Y103 (for DNA cleavage activity) is an active-site residue. An RCR-3 motif is present at residues 103-106 (YVDK). D107 is an a divalent metal cation binding site. Positions 143–153 (LEQALQILKEE) are binding to RBR1. The segment at 156-176 (KDYFLQHHNLLNNAQKIFQRA) is oligomerization. Residue 222-229 (GDSRTGKT) participates in ATP binding.

Belongs to the geminiviridae Rep protein family. In terms of assembly, homooligomer. Interacts with the replication enhancer protein (REn). Interacts with host retinoblastoma-related protein 1 (RBR1), and may thereby induce the transcription of host replicative enzymes even if the cell is not dividing anymore. Interacts with host PCNA. Interacts with host SCE1 protein. Mg(2+) is required as a cofactor. It depends on Mn(2+) as a cofactor.

It localises to the host nucleus. Functionally, essential for the replication of viral ssDNA. The closed circular ssDNA genome is first converted to a superhelical dsDNA. Rep binds a specific region at the genome origin of replication. It introduces an endonucleolytic nick within the conserved sequence 5'-TAATATTAC-3' in the intergenic region of the genome present in all geminiviruses, thereby initiating the rolling circle replication (RCR). Following cleavage, binds covalently to the 5'-phosphate of DNA as a tyrosyl ester. The cleavage gives rise to a free 3'-OH that serves as a primer for the cellular DNA polymerase. The polymerase synthesizes the (+) strand DNA by rolling circle mechanism. After one round of replication, a Rep-catalyzed nucleotidyl transfer reaction releases a circular single-stranded virus genome, thereby terminating the replication. Displays origin-specific DNA cleavage, nucleotidyl transferase, ATPase and helicase activities. The chain is Replication-associated protein from Beet curly top virus (strain California/Logan) (BCTV).